Reading from the N-terminus, the 241-residue chain is Histone H1-II (241 aa).

Residues 1-10 (MASDAPEVKA) show a composition bias toward basic and acidic residues. 2 disordered regions span residues 1–27 (MASD…THPP) and 89–241 (NSYK…AKKA). Basic residues predominate over residues 11–20 (PKAKTQKKPK). Residues 24 to 95 (THPPYIQMVT…KVKNSYKLSD (72 aa)) enclose the H15 domain. Positions 99–111 (SKAKAAAKPKAAP) are enriched in basic residues. 3 tandem repeats follow at residues 111 to 116 (PKKAAA), 117 to 122 (PKKAAA), and 123 to 128 (PKKAKA). The segment at 111-217 (PKKAAAPKKA…KAATPKKAKA (107 aa)) is 8 X 6 AA repeats of P-K-K-A-[AK]-A. The segment covering 129 to 155 (PKKEGEKKAVKPKSEKKAAKPKTEKKP) has biased composition (basic and acidic residues). 2 stretches are compositionally biased toward basic residues: residues 156-184 (KAAK…KATP) and 194-241 (AAPK…AKKA). The DNA-binding element occupies 183–186 (TPKK). Tandem repeats lie at residues 184-189 (PKKAAA), 190-195 (PKKAAA), 196-201 (PKKAKA), 204-209 (PKKAKA), and 212-217 (PKKAKA). DNA-binding regions lie at residues 203 to 206 (TPKK) and 211 to 214 (TPKK).

It belongs to the histone H1/H5 family.

The protein resides in the nucleus. The protein localises to the chromosome. Its function is as follows. Histones H1 are necessary for the condensation of nucleosome chains into higher-order structures. This Volvox carteri (Green alga) protein is Histone H1-II (H1-II).